A 263-amino-acid chain; its full sequence is Protein MARD1 (263 aa).

The FLZ-type zinc-finger motif lies at 219 to 263 (SFLSRCFTCKKNLDQKQDIYIYRGEKGFCSSECRYQEMLLDQMET).

This sequence belongs to the FLZ family. In terms of assembly, interacts with KIN10 and KIN11 via its FLZ-type zinc finger domain. Interacts with KINB1 and KINB2 via its N-terminal part. Interacts with TZF4, TZF5 and TZF6. Interacts with MPK3 and MPK6.

The protein localises to the cytoplasm. The protein resides in the stress granule. It localises to the P-body. May act as an adapter to facilitate the interaction of SnRK1 complex with effector proteins, conferring tissue- and stimulus-type specific differences in the SnRK1 regulation pathway. Involved in seed dormancy control. In Arabidopsis thaliana (Mouse-ear cress), this protein is Protein MARD1.